The following is a 227-amino-acid chain: Gamma-glutamyl-hercynylcysteine sulfoxide hydrolase (227 aa).

C2 functions as the Nucleophile in the catalytic mechanism. The 226-residue stretch at 2–227 (CRHVAWLGAP…RDAHVVVTPL (226 aa)) folds into the Glutamine amidotransferase type-2 domain.

It carries out the reaction gamma-L-glutamyl-hercynylcysteine S-oxide + H2O = S-(hercyn-2-yl)-L-cysteine S-oxide + L-glutamate. It participates in amino-acid biosynthesis; ergothioneine biosynthesis. Its function is as follows. Catalyzes the hydrolysis of the gamma-glutamyl amide bond of hercynyl-gamma-L-glutamyl-L-cysteine sulfoxide to produce hercynylcysteine sulfoxide, a step in the biosynthesis pathway of ergothioneine. This Mycolicibacterium smegmatis (strain ATCC 700084 / mc(2)155) (Mycobacterium smegmatis) protein is Gamma-glutamyl-hercynylcysteine sulfoxide hydrolase.